A 952-amino-acid chain; its full sequence is MEKTYNPTSIEQALYQTWEEKGYFKPHGDTTKESYSIMIPPPNVTGSLHMGHAFQDTIMDTLIRCERMKGKNTLWQVGTDHAGIATQMVVERKIAAEEGKTKHDYGRDAFIDKIWEWKGESGGTITKQLRRLGASVDWDRERFTMDDGLSNAVQEVFVRLYEDDLIYRGKRLVNWDPKLHTAISDLEVENKDTKGHMWHFRYPLADGVKTADGKDYIVVATTRPETMLGDTGVAVNPEDPRYKDLIGKEIILPIVDRRIPIVGDEHADMEKGTGCVKITPAHDFNDYEVGKRHQLPMINILTFDANIRGAAEVFNTNGEPSDAYSTELPAKYHGMERFAARKAIVAEFDELGLLEEVKDHDLQVPYGDRGGVVIEPMLTDQWYVRTAPLAKTAVEAVENGDIQFVPKQYENMYFSWMRDVQDWCISRQLWWGHRIPAWYDNQGNVYVGRTEEEVRKNNNLESVIELHQDEDVLDTWFSSALWTFGTQGWPEQTDDLKVFHPSDVLVTGFDIIFFWVARMIMMTMHFVKDENGKPQVPFKTVYVTGLIRDENGDKMSKSKGNVLDPIDMIDGIDLESLVEKRTGNMMQPQLAKKIEKNTRKTFENGIEAYGTDALRFTLAAMASTGRDINWDMKRLEGYRNFCNKLWNASRYVMMNTEEQDCGFNGGEIEYSLADKWIESQFELAAKAFNNHIDNFRLDMASNTLYEFIWNQFCDWYLELTKPVLWKGTEAQQRGTRRTLITVLEKTLRLAHPVIPYITETIWQSIKPLVEGVEGETIMLQALPQFDEANFNQEALDDIEWVKAFITSIRNLRAEYDINPGKPLDVMLKAANAEDAARLEANKQVLMSLAKLESVRVLAADEETPACATALVAKSELMIPMAGLIDKDAELARLDGEIKKTHGEIKRIEGKLGNEGFVAKAPEAVVAKEREKLEGYKETLAKLEEQKKTIAAL.

Residues 42 to 52 (PNVTGSLHMGH) carry the 'HIGH' region motif. The short motif at 554–558 (KMSKS) is the 'KMSKS' region element. Residue lysine 557 coordinates ATP. A coiled-coil region spans residues 888 to 952 (AELARLDGEI…EEQKKTIAAL (65 aa)).

It belongs to the class-I aminoacyl-tRNA synthetase family. ValS type 1 subfamily. In terms of assembly, monomer.

Its subcellular location is the cytoplasm. The catalysed reaction is tRNA(Val) + L-valine + ATP = L-valyl-tRNA(Val) + AMP + diphosphate. Catalyzes the attachment of valine to tRNA(Val). As ValRS can inadvertently accommodate and process structurally similar amino acids such as threonine, to avoid such errors, it has a 'posttransfer' editing activity that hydrolyzes mischarged Thr-tRNA(Val) in a tRNA-dependent manner. The polypeptide is Valine--tRNA ligase (Vibrio parahaemolyticus serotype O3:K6 (strain RIMD 2210633)).